A 565-amino-acid polypeptide reads, in one-letter code: Ubiquitin carboxyl-terminal hydrolase 39 (565 aa).

Composition is skewed to basic and acidic residues over residues 1-21 (MSGRSKRESRGSTRGKRESES) and 28-39 (VKRERDREREPE). 2 disordered regions span residues 1-61 (MSGR…SARE) and 75-95 (EREVDEDSEPEREVRAKNGRV). Serine 46 bears the Phosphoserine mark. Lysine 51 participates in a covalent cross-link: Glycyl lysine isopeptide (Lys-Gly) (interchain with G-Cter in SUMO2). Serine 82 is modified (phosphoserine). The segment covering 85–95 (EREVRAKNGRV) has biased composition (basic and acidic residues). The segment at 103 to 200 (RHCPYLDTIN…YVLKPTFTKQ (98 aa)) adopts a UBP-type; degenerate zinc-finger fold. Residues cysteine 136, cysteine 139, histidine 155, and histidine 161 each coordinate Zn(2+). Residues 225-555 (VGLNNIKAND…EAYIQIWKRR (331 aa)) form the USP domain.

The protein belongs to the peptidase C19 family. As to quaternary structure, the U4/U6-U5 tri-snRNP complex is a building block of the precatalytic spliceosome (spliceosome B complex). Component of the U4/U6-U5 tri-snRNP complex composed of the U4, U6 and U5 snRNAs and at least PRPF3, PRPF4, PRPF6, PRPF8, PRPF31, SNRNP200, TXNL4A, SNRNP40, SNRPB, SNRPD1, SNRPD2, SNRPD3, SNRPE, SNRPF, SNRPG, DDX23, CD2BP2, PPIH, SNU13, EFTUD2, SART1 and USP39, plus LSM2, LSM3, LSM4, LSM5, LSM6, LSM7 and LSM8.

It localises to the nucleus. The catalysed reaction is Thiol-dependent hydrolysis of ester, thioester, amide, peptide and isopeptide bonds formed by the C-terminal Gly of ubiquitin (a 76-residue protein attached to proteins as an intracellular targeting signal).. In terms of biological role, deubiquitinating enzyme that plays a role in many cellular processes including cellular antiviral response, epithelial morphogenesis, DNA repair or B-cell development. Plays a role in pre-mRNA splicing as a component of the U4/U6-U5 tri-snRNP, one of the building blocks of the precatalytic spliceosome. Specifically regulates immunoglobulin gene rearrangement in a spliceosome-dependent manner, which involves modulating chromatin interactions at the Igh locus and therefore plays an essential role in B-cell development. Regulates AURKB mRNA levels, and thereby plays a role in cytokinesis and in the spindle checkpoint. Regulates apoptosis and G2/M cell cycle checkpoint in response to DNA damage by deubiquitinating and stabilizing CHK2. Also plays an important role in DNA repair by controlling the recruitment of XRCC4/LIG4 to DNA double-strand breaks for non-homologous end-joining repair. Participates in antiviral activity by affecting the type I IFN signaling by stabilizing STAT1 and decreasing its 'Lys-6'-linked ubiquitination. Contributes to non-canonical Wnt signaling during epidermal differentiation. Acts as a negative regulator NF-kappa-B activation through deubiquitination of 'Lys-48'-linked ubiquitination of NFKBIA. This chain is Ubiquitin carboxyl-terminal hydrolase 39, found in Homo sapiens (Human).